The primary structure comprises 598 residues: Beta-hexosaminidase A (598 aa).

The first 11 residues, 1 to 11, serve as a signal peptide directing secretion; it reads MSFITSAHATA. D305 is an active-site residue.

The protein belongs to the glycosyl hydrolase 3 family.

The enzyme catalyses Hydrolysis of terminal non-reducing N-acetyl-D-hexosamine residues in N-acetyl-beta-D-hexosaminides.. In terms of biological role, most active towards p-nitrophenyl-N-acetyl-beta-D-glucosaminide(PNP-beta-GlcNAc) and diacetylchitobiose. This Pseudoalteromonas piscicida protein is Beta-hexosaminidase A (cht60).